The following is a 167-amino-acid chain: Ubiquitin-fold modifier-conjugating enzyme 1 (167 aa).

The active-site Glycyl thioester intermediate is the cysteine 116.

The protein belongs to the ubiquitin-conjugating enzyme family. UFC1 subfamily. In terms of assembly, interacts with UBA5 (via C-terminus). Interacts with UFL1. Interacts with UFM1.

Its function is as follows. E2-like enzyme which specifically catalyzes the second step in ufmylation. Accepts the ubiquitin-like modifier UFM1 from the E1 enzyme UBA5 and forms an intermediate with UFM1 via a thioester linkage. Ufmylation is involved in various processes, such as ribosome recycling, response to DNA damage, interferon response or reticulophagy (also called ER-phagy). The chain is Ubiquitin-fold modifier-conjugating enzyme 1 from Salmo salar (Atlantic salmon).